The primary structure comprises 458 residues: NADH-ubiquinone oxidoreductase chain 4 (458 aa).

12 helical membrane passes run 21–43 (ASLWTNTTTYSLLIATISLQWLN), 58–78 (IDQISAPLLVLSCWLLPLMLL), 93–112 (RTFIVTLTTIQPFIILAFSA), 116–138 (TLFYISFEATLIPTLILITRWGN), 145–165 (AGIYLLFYTLISSLPLLVTIL), 196–216 (GLALLMAFMVKAPLYGLHLWL), 224–244 (PIAGSMLLAALLLKLGGYGIM), 257–277 (LSYPFLALALWGALMTSSICL), 285–305 (LIAYSSVSHMGLVIAASMIQT), 309–329 (FSGAMILMISHGLTSSMLFCL), 341–361 (ILLLTRGLQPLLPLMSVWWLL), and 379–399 (LTIMIALFNWSTPTIILTGLA).

This sequence belongs to the complex I subunit 4 family.

It localises to the mitochondrion membrane. It catalyses the reaction a ubiquinone + NADH + 5 H(+)(in) = a ubiquinol + NAD(+) + 4 H(+)(out). Core subunit of the mitochondrial membrane respiratory chain NADH dehydrogenase (Complex I) that is believed to belong to the minimal assembly required for catalysis. Complex I functions in the transfer of electrons from NADH to the respiratory chain. The immediate electron acceptor for the enzyme is believed to be ubiquinone. The sequence is that of NADH-ubiquinone oxidoreductase chain 4 (MT-ND4) from Struthio camelus (Common ostrich).